The chain runs to 275 residues: Phosphate import ATP-binding protein PstB (275 aa).

Residues 28-270 form the ABC transporter domain; sequence IDCRDIRVFY…PREKRTEDYI (243 aa). Position 60–67 (60–67) interacts with ATP; that stretch reads GPSGCGKS.

The protein belongs to the ABC transporter superfamily. Phosphate importer (TC 3.A.1.7) family. The complex is composed of two ATP-binding proteins (PstB), two transmembrane proteins (PstC and PstA) and a solute-binding protein (PstS).

The protein resides in the cell inner membrane. It carries out the reaction phosphate(out) + ATP + H2O = ADP + 2 phosphate(in) + H(+). In terms of biological role, part of the ABC transporter complex PstSACB involved in phosphate import. Responsible for energy coupling to the transport system. The protein is Phosphate import ATP-binding protein PstB of Hyphomonas neptunium (strain ATCC 15444).